The sequence spans 230 residues: 3-isopropylmalate dehydratase small subunit (230 aa).

This sequence belongs to the LeuD family. LeuD type 1 subfamily. As to quaternary structure, heterodimer of LeuC and LeuD.

The enzyme catalyses (2R,3S)-3-isopropylmalate = (2S)-2-isopropylmalate. It functions in the pathway amino-acid biosynthesis; L-leucine biosynthesis; L-leucine from 3-methyl-2-oxobutanoate: step 2/4. Catalyzes the isomerization between 2-isopropylmalate and 3-isopropylmalate, via the formation of 2-isopropylmaleate. The protein is 3-isopropylmalate dehydratase small subunit of Bifidobacterium longum (strain DJO10A).